We begin with the raw amino-acid sequence, 373 residues long: Chaperone protein DnaJ (373 aa).

Positions 5–70 (DYYEVLGLQK…EKKSNYDQFG (66 aa)) constitute a J domain. The CR-type zinc-finger motif lies at 132–214 (GVEKEITVNR…CRGNGNVRKT (83 aa)). Zn(2+)-binding residues include cysteine 145, cysteine 148, cysteine 162, cysteine 165, cysteine 188, cysteine 191, cysteine 202, and cysteine 205. 4 CXXCXGXG motif repeats span residues 145–152 (CEHCNGSG), 162–169 (CPTCSGTG), 188–195 (CDRCSGTG), and 202–209 (CTHCRGNG).

It belongs to the DnaJ family. As to quaternary structure, homodimer. It depends on Zn(2+) as a cofactor.

The protein resides in the cytoplasm. Participates actively in the response to hyperosmotic and heat shock by preventing the aggregation of stress-denatured proteins and by disaggregating proteins, also in an autonomous, DnaK-independent fashion. Unfolded proteins bind initially to DnaJ; upon interaction with the DnaJ-bound protein, DnaK hydrolyzes its bound ATP, resulting in the formation of a stable complex. GrpE releases ADP from DnaK; ATP binding to DnaK triggers the release of the substrate protein, thus completing the reaction cycle. Several rounds of ATP-dependent interactions between DnaJ, DnaK and GrpE are required for fully efficient folding. Also involved, together with DnaK and GrpE, in the DNA replication of plasmids through activation of initiation proteins. This Clostridium botulinum (strain Alaska E43 / Type E3) protein is Chaperone protein DnaJ.